Here is a 430-residue protein sequence, read N- to C-terminus: Adenylosuccinate synthetase (430 aa).

GTP contacts are provided by residues 11–17 and 39–41; these read GDEGKGK and GHS. Asp12 functions as the Proton acceptor in the catalytic mechanism. Residues Asp12 and Gly39 each contribute to the Mg(2+) site. IMP-binding positions include 12–15, 37–40, Thr129, Arg143, Asn221, Thr236, and Arg300; these read DEGK and NAGH. His40 (proton donor) is an active-site residue. 296 to 302 serves as a coordination point for substrate; sequence VSTGRKR. Residues Arg302, 328-330, and 412-414 contribute to the GTP site; these read KLD and GTG.

It belongs to the adenylosuccinate synthetase family. As to quaternary structure, homodimer. It depends on Mg(2+) as a cofactor.

It is found in the cytoplasm. It catalyses the reaction IMP + L-aspartate + GTP = N(6)-(1,2-dicarboxyethyl)-AMP + GDP + phosphate + 2 H(+). The protein operates within purine metabolism; AMP biosynthesis via de novo pathway; AMP from IMP: step 1/2. In terms of biological role, plays an important role in the de novo pathway and in the salvage pathway of purine nucleotide biosynthesis. Catalyzes the first committed step in the biosynthesis of AMP from IMP. The sequence is that of Adenylosuccinate synthetase from Neurospora crassa (strain ATCC 24698 / 74-OR23-1A / CBS 708.71 / DSM 1257 / FGSC 987).